A 174-amino-acid polypeptide reads, in one-letter code: Sarcoplasmic calcium-binding protein (174 aa).

An N-acetylserine modification is found at serine 1. EF-hand domains follow at residues 3-38, 55-90, 91-126, and 125-160; these read LWVQ…FAKE, GVWD…NAKA, VVEG…LGLN, and LNPD…FFIN. 4 residues coordinate Ca(2+): aspartate 16, aspartate 18, aspartate 20, and aspartate 27. Aspartate 104, asparagine 106, aspartate 108, methionine 110, glutamate 115, aspartate 138, asparagine 140, aspartate 142, and glutamate 149 together coordinate Ca(2+).

Functionally, like parvalbumins, SCPs seem to be more abundant in fast contracting muscles, but no functional relationship can be established from this distribution. The chain is Sarcoplasmic calcium-binding protein from Perinereis vancaurica tetradentata (Sandworm).